Reading from the N-terminus, the 383-residue chain is S-(hydroxymethyl)glutathione dehydrogenase (383 aa).

Cysteine 51 provides a ligand contact to Zn(2+). Position 52 (histidine 52) interacts with NAD(+). The Zn(2+) site is built by histidine 73, glutamate 74, cysteine 103, cysteine 106, cysteine 109, cysteine 117, and cysteine 180. Residues 205–210, aspartate 229, and 298–300 contribute to the NAD(+) site; these read GAGCVG and IGV.

The protein belongs to the zinc-containing alcohol dehydrogenase family. Class-III subfamily. Zn(2+) serves as cofactor.

It catalyses the reaction a primary alcohol + NAD(+) = an aldehyde + NADH + H(+). It carries out the reaction a secondary alcohol + NAD(+) = a ketone + NADH + H(+). The enzyme catalyses S-(hydroxymethyl)glutathione + NADP(+) = S-formylglutathione + NADPH + H(+). The catalysed reaction is S-(hydroxymethyl)glutathione + NAD(+) = S-formylglutathione + NADH + H(+). It catalyses the reaction S-nitrosoglutathione + NADH + H(+) = S-(hydroxysulfenamide)glutathione + NAD(+). Functionally, oxidizes long-chain alcohols and, in the presence of glutathione, is able to oxidize formaldehyde. Also acts as a S-nitroso-glutathione reductase by catalyzing the NADH-dependent reduction of S-nitrosoglutathione, thereby regulating protein S-nitrosylation. This is S-(hydroxymethyl)glutathione dehydrogenase (FDH1) from Aspergillus oryzae (strain ATCC 42149 / RIB 40) (Yellow koji mold).